Consider the following 114-residue polypeptide: Nucleoid-associated protein Cyan7425_0899 (114 aa).

This sequence belongs to the YbaB/EbfC family. In terms of assembly, homodimer.

It localises to the cytoplasm. Its subcellular location is the nucleoid. Its function is as follows. Binds to DNA and alters its conformation. May be involved in regulation of gene expression, nucleoid organization and DNA protection. This Cyanothece sp. (strain PCC 7425 / ATCC 29141) protein is Nucleoid-associated protein Cyan7425_0899.